A 258-amino-acid chain; its full sequence is Indole-3-glycerol phosphate synthase (258 aa).

Belongs to the TrpC family.

The enzyme catalyses 1-(2-carboxyphenylamino)-1-deoxy-D-ribulose 5-phosphate + H(+) = (1S,2R)-1-C-(indol-3-yl)glycerol 3-phosphate + CO2 + H2O. It participates in amino-acid biosynthesis; L-tryptophan biosynthesis; L-tryptophan from chorismate: step 4/5. The polypeptide is Indole-3-glycerol phosphate synthase (Geobacillus thermodenitrificans (strain NG80-2)).